The following is a 372-amino-acid chain: Bifunctional coenzyme PQQ synthesis protein C/D (372 aa).

The pqqC stretch occupies residues 1–267; sequence MTAQFPPPVP…VAETNSAEDS (267 aa). Residues 260-288 are disordered; sequence ETNSAEDSPAAAASPAATTAEPTAFSGSD. A compositionally biased stretch (low complexity) spans 264–283; sequence AEDSPAAAASPAATTAEPTA. Residues 268 to 280 are linker; it reads PAAAASPAATTAE. The segment at 281-372 is pqqD; it reads PTAFSGSDVP…GLAQKRVLER (92 aa).

The protein in the N-terminal section; belongs to the PqqC family. It in the C-terminal section; belongs to the PqqD family. As to quaternary structure, monomer. Interacts with PqqE.

The enzyme catalyses 6-(2-amino-2-carboxyethyl)-7,8-dioxo-1,2,3,4,7,8-hexahydroquinoline-2,4-dicarboxylate + 3 O2 = pyrroloquinoline quinone + 2 H2O2 + 2 H2O + H(+). It participates in cofactor biosynthesis; pyrroloquinoline quinone biosynthesis. In terms of biological role, the PqqC region is involved in ring cyclization and eight-electron oxidation of 3a-(2-amino-2-carboxyethyl)-4,5-dioxo-4,5,6,7,8,9-hexahydroquinoline-7,9-dicarboxylic-acid to PQQ. The PqqD region functions as a PqqA binding domain and presents PqqA to PqqE. This is Bifunctional coenzyme PQQ synthesis protein C/D (pqqCD) from Methylorubrum extorquens (strain ATCC 14718 / DSM 1338 / JCM 2805 / NCIMB 9133 / AM1) (Methylobacterium extorquens).